A 431-amino-acid chain; its full sequence is REST corepressor 1 (431 aa).

Basic and acidic residues predominate over residues Met-1–Gly-10. The tract at residues Met-1 to Arg-53 is disordered. The span at Asn-17–Val-28 shows a compositional bias: polar residues. Over residues Asn-29 to Ser-42 the composition is skewed to low complexity. The 86-residue stretch at Gly-50–Thr-135 folds into the ELM2 domain. One can recognise an SANT 1 domain in the interval Pro-136–Ser-187. Residues Ser-190–Gly-262 are disordered. Residues Glu-224–Ile-242 are compositionally biased toward basic and acidic residues. Residues Gln-267–Gly-314 are a coiled coil. Positions Lys-327–Asn-378 constitute an SANT 2 domain.

The protein belongs to the CoREST family. Component of a BHC histone deacetylase complex that contains KDM1A. Expressed in territories in which neurogenesis takes place.

The protein resides in the nucleus. Essential component of the BHC complex, a corepressor complex that represses transcription of neuron-specific genes in non-neuronal cells. The BHC complex is recruited at RE1/NRSE sites by REST and acts by deacetylating and demethylating specific sites on histones, thereby acting as a chromatin modifier. In the BHC complex, it serves as a molecular beacon for the recruitment of molecular machinery that imposes silencing across a chromosomal interval. Plays a central role in demethylation of Lys-4 of histone H3 by promoting demethylase activity of KDM1A on core histones and nucleosomal substrates. This Xenopus laevis (African clawed frog) protein is REST corepressor 1 (rcor1).